A 411-amino-acid polypeptide reads, in one-letter code: L-cysteine:1D-myo-inositol 2-amino-2-deoxy-alpha-D-glucopyranoside ligase (411 aa).

Residue cysteine 43 coordinates Zn(2+). L-cysteinyl-5'-AMP-binding positions include 43–46 (CGIT), threonine 58, and 81–83 (NVT). A 'HIGH' region motif is present at residues 45–55 (ITPYDATHLGH). Positions 186–191 (QRGGDP) match the 'ERGGDP' region motif. Tryptophan 226 contacts L-cysteinyl-5'-AMP. Cysteine 230 is a binding site for Zn(2+). Residue 248 to 250 (GSD) coordinates L-cysteinyl-5'-AMP. Histidine 255 is a binding site for Zn(2+). Residue isoleucine 282 coordinates L-cysteinyl-5'-AMP. Positions 288-292 (KMSKS) match the 'KMSKS' region motif.

This sequence belongs to the class-I aminoacyl-tRNA synthetase family. MshC subfamily. In terms of assembly, monomer. Zn(2+) serves as cofactor.

The catalysed reaction is 1D-myo-inositol 2-amino-2-deoxy-alpha-D-glucopyranoside + L-cysteine + ATP = 1D-myo-inositol 2-(L-cysteinylamino)-2-deoxy-alpha-D-glucopyranoside + AMP + diphosphate + H(+). Its function is as follows. Catalyzes the ATP-dependent condensation of GlcN-Ins and L-cysteine to form L-Cys-GlcN-Ins. This is L-cysteine:1D-myo-inositol 2-amino-2-deoxy-alpha-D-glucopyranoside ligase from Mycobacterium marinum (strain ATCC BAA-535 / M).